The primary structure comprises 287 residues: ATP synthase gamma chain (287 aa).

This sequence belongs to the ATPase gamma chain family. In terms of assembly, F-type ATPases have 2 components, CF(1) - the catalytic core - and CF(0) - the membrane proton channel. CF(1) has five subunits: alpha(3), beta(3), gamma(1), delta(1), epsilon(1). CF(0) has three main subunits: a, b and c.

It is found in the cell inner membrane. Functionally, produces ATP from ADP in the presence of a proton gradient across the membrane. The gamma chain is believed to be important in regulating ATPase activity and the flow of protons through the CF(0) complex. This chain is ATP synthase gamma chain, found in Serratia proteamaculans (strain 568).